Reading from the N-terminus, the 1026-residue chain is Multidrug resistance protein MdtC (1026 aa).

A run of 11 helical transmembrane segments spans residues 15-35, 333-353, 360-380, 387-407, 431-451, 463-483, 528-548, 853-873, 897-917, 953-973, and 984-1004; these read ILIAAAITLCGILGFRLLPVA, EVEETLAISVALVILVVFLFL, LIPAVAVPVSLIGTFAAMYLC, LSLMALTIATGFVVDDAIVVL, VGFTVISMSLSLVAVFLPLLL, FAVTLSVAIGISLVVSLTLTP, LVGVVFLGTVALNIWLYIAIP, LILIVAAIATVYIVLGILYES, LFNAPFSLIALIGIMLLIGIV, PIMMTTLAALFGALPLVLSGG, and ITIVGGLVMSQLLTLYTTPVV.

Belongs to the resistance-nodulation-cell division (RND) (TC 2.A.6) family. MdtC subfamily. In terms of assembly, part of a tripartite efflux system composed of MdtA, MdtB and MdtC. MdtC forms a heteromultimer with MdtB.

It localises to the cell inner membrane. This Salmonella gallinarum (strain 287/91 / NCTC 13346) protein is Multidrug resistance protein MdtC.